The following is a 556-amino-acid chain: 2-succinyl-5-enolpyruvyl-6-hydroxy-3-cyclohexene-1-carboxylate synthase (556 aa).

It belongs to the TPP enzyme family. MenD subfamily. In terms of assembly, homodimer. Requires Mg(2+) as cofactor. Mn(2+) is required as a cofactor. It depends on thiamine diphosphate as a cofactor.

The enzyme catalyses isochorismate + 2-oxoglutarate + H(+) = 5-enolpyruvoyl-6-hydroxy-2-succinyl-cyclohex-3-ene-1-carboxylate + CO2. It functions in the pathway quinol/quinone metabolism; 1,4-dihydroxy-2-naphthoate biosynthesis; 1,4-dihydroxy-2-naphthoate from chorismate: step 2/7. Its pathway is quinol/quinone metabolism; menaquinone biosynthesis. In terms of biological role, catalyzes the thiamine diphosphate-dependent decarboxylation of 2-oxoglutarate and the subsequent addition of the resulting succinic semialdehyde-thiamine pyrophosphate anion to isochorismate to yield 2-succinyl-5-enolpyruvyl-6-hydroxy-3-cyclohexene-1-carboxylate (SEPHCHC). The chain is 2-succinyl-5-enolpyruvyl-6-hydroxy-3-cyclohexene-1-carboxylate synthase from Salmonella paratyphi B (strain ATCC BAA-1250 / SPB7).